The chain runs to 61 residues: Small ribosomal subunit protein uS14 (61 aa).

Zn(2+) contacts are provided by cysteine 24, cysteine 27, cysteine 40, and cysteine 43.

The protein belongs to the universal ribosomal protein uS14 family. Zinc-binding uS14 subfamily. Part of the 30S ribosomal subunit. Contacts proteins S3 and S10. Zn(2+) is required as a cofactor.

Its function is as follows. Binds 16S rRNA, required for the assembly of 30S particles and may also be responsible for determining the conformation of the 16S rRNA at the A site. In Clostridium acetobutylicum (strain ATCC 824 / DSM 792 / JCM 1419 / IAM 19013 / LMG 5710 / NBRC 13948 / NRRL B-527 / VKM B-1787 / 2291 / W), this protein is Small ribosomal subunit protein uS14.